The following is a 251-amino-acid chain: MPKRDAPWRHMAGTSKVSRSGNYSPSGGMGSKSNKANAWVNRPMYRKPRIYRMYKSPDVPKGCEGPCKVQSYEQRHDISHVGKVMCISDITRGNGITHRVGKRFCVKSVYILGKIWMDENIMLKNHTNSVIFWLVRDRRPYGTPMDFGQVFNMFDNEPSTATVKNDLRDRYQVMHRFNAKVSGGQYASNEQALVRRFWKVNNHVVYNHQEAGKYENHTENALLLYMACTHASNPVYATLKIRIYFYDSITN.

Positions 1–35 are disordered; that stretch reads MPKRDAPWRHMAGTSKVSRSGNYSPSGGMGSKSNK. The Bipartite nuclear localization signal motif lies at 3 to 20; sequence KRDAPWRHMAGTSKVSRS. Polar residues predominate over residues 15–35; sequence SKVSRSGNYSPSGGMGSKSNK. A Nuclear localization signal motif is present at residues 35 to 49; the sequence is KANAWVNRPMYRKPR. The segment at 54 to 71 is a zinc-finger region; it reads YKSPDVPKGCEGPCKVQS. The short motif at 96 to 117 is the Nuclear export signal element; sequence ITHRVGKRFCVKSVYILGKIWM. Positions 195-242 match the Bipartite nuclear localization signal motif; that stretch reads RRFWKVNNHVVYNHQEAGKYENHTENALLLYMACTHASNPVYATLKIR.

This sequence belongs to the geminiviridae capsid protein family. In terms of assembly, homomultimer. Binds to single-stranded and double-stranded viral DNA. Interacts (via nuclear localization signals) with host importin alpha-1a.

It localises to the virion. The protein resides in the host nucleus. Functionally, encapsidates the viral DNA into characteristic twinned ('geminate') particles. Binds the genomic viral ssDNA and shuttles it into and out of the cell nucleus. The CP of bipartite geminiviruses is not required for cell-to-cell or systemic movement. This chain is Capsid protein, found in Macroptilium lathyroides (Lima bean).